The chain runs to 301 residues: NAD kinase 2 (301 aa).

Aspartate 77 (proton acceptor) is an active-site residue. Residues 77–78 (DG), arginine 82, 151–152 (NE), arginine 162, aspartate 181, and 192–197 (TAYAFS) contribute to the NAD(+) site.

The protein belongs to the NAD kinase family. A divalent metal cation is required as a cofactor.

Its subcellular location is the cytoplasm. The catalysed reaction is NAD(+) + ATP = ADP + NADP(+) + H(+). Functionally, involved in the regulation of the intracellular balance of NAD and NADP, and is a key enzyme in the biosynthesis of NADP. Catalyzes specifically the phosphorylation on 2'-hydroxyl of the adenosine moiety of NAD to yield NADP. This chain is NAD kinase 2, found in Streptomyces avermitilis (strain ATCC 31267 / DSM 46492 / JCM 5070 / NBRC 14893 / NCIMB 12804 / NRRL 8165 / MA-4680).